Reading from the N-terminus, the 253-residue chain is NAD(P)H-quinone oxidoreductase subunit K (253 aa).

Cys-68, Cys-69, Cys-133, and Cys-164 together coordinate [4Fe-4S] cluster.

Belongs to the complex I 20 kDa subunit family. NDH-1 can be composed of about 15 different subunits; different subcomplexes with different compositions have been identified which probably have different functions. [4Fe-4S] cluster serves as cofactor.

The protein localises to the cellular thylakoid membrane. The catalysed reaction is a plastoquinone + NADH + (n+1) H(+)(in) = a plastoquinol + NAD(+) + n H(+)(out). It carries out the reaction a plastoquinone + NADPH + (n+1) H(+)(in) = a plastoquinol + NADP(+) + n H(+)(out). Functionally, NDH-1 shuttles electrons from an unknown electron donor, via FMN and iron-sulfur (Fe-S) centers, to quinones in the respiratory and/or the photosynthetic chain. The immediate electron acceptor for the enzyme in this species is believed to be plastoquinone. Couples the redox reaction to proton translocation, and thus conserves the redox energy in a proton gradient. Cyanobacterial NDH-1 also plays a role in inorganic carbon-concentration. This chain is NAD(P)H-quinone oxidoreductase subunit K, found in Synechococcus sp. (strain CC9311).